A 513-amino-acid chain; its full sequence is Cobyric acid synthase (513 aa).

The GATase cobBQ-type domain maps to Arg-270–Val-470. Residue Cys-351 is the Nucleophile of the active site. Residue His-462 is part of the active site.

The protein belongs to the CobB/CobQ family. CobQ subfamily.

It functions in the pathway cofactor biosynthesis; adenosylcobalamin biosynthesis. Functionally, catalyzes amidations at positions B, D, E, and G on adenosylcobyrinic A,C-diamide. NH(2) groups are provided by glutamine, and one molecule of ATP is hydrogenolyzed for each amidation. This Leptothrix cholodnii (strain ATCC 51168 / LMG 8142 / SP-6) (Leptothrix discophora (strain SP-6)) protein is Cobyric acid synthase.